A 605-amino-acid polypeptide reads, in one-letter code: Condensin-2 complex subunit H2 (605 aa).

Thr19 is modified (phosphothreonine). Residues Ser95, Ser200, Ser208, Ser228, and Ser232 each carry the phosphoserine modification. Residues 194–331 (LEPEGMSPME…PFDSLESKPF (138 aa)) form a disordered region. Residues 256-266 (GEDEDAEEAVE) are compositionally biased toward acidic residues. Phosphoserine is present on residues Ser282, Ser284, Ser466, and Ser492.

Belongs to the CND2 H2 (condensin-2 subunit 2) family. In terms of assembly, component of the condensin-2 complex, which contains the SMC2 and SMC4 heterodimer, and three non SMC subunits, NCAPG2, NCAPH2 and NCAPD3 that probably regulate the complex.

It is found in the nucleus. The protein resides in the chromosome. Functionally, regulatory subunit of the condensin-2 complex, a complex that seems to provide chromosomes with an additional level of organization and rigidity and in establishing mitotic chromosome architecture. May promote the resolution of double-strand DNA catenanes (intertwines) between sister chromatids. Condensin-mediated compaction likely increases tension in catenated sister chromatids, providing directionality for type II topoisomerase-mediated strand exchanges toward chromatid decatenation. Required for decatenation of chromatin bridges at anaphase. Early in neurogenesis, may play an essential role to ensure accurate mitotic chromosome condensation in neuron stem cells, ultimately affecting neuron pool and cortex size. Seems to have lineage-specific role in T-cell development. The sequence is that of Condensin-2 complex subunit H2 (NCAPH2) from Homo sapiens (Human).